A 115-amino-acid polypeptide reads, in one-letter code: Large ribosomal subunit protein bL19 (115 aa).

It belongs to the bacterial ribosomal protein bL19 family.

In terms of biological role, this protein is located at the 30S-50S ribosomal subunit interface and may play a role in the structure and function of the aminoacyl-tRNA binding site. The chain is Large ribosomal subunit protein bL19 from Buchnera aphidicola subsp. Acyrthosiphon pisum (strain 5A).